A 431-amino-acid chain; its full sequence is Mediator of RNA polymerase II transcription subunit 2 (431 aa).

Ser-6 carries the phosphoserine modification. A compositionally biased stretch (basic and acidic residues) spans 105–140; sequence GKEKEKEREEAEKKRAEQENMRKVREQEELKKRQEL. Positions 105–178 are disordered; it reads GKEKEKEREE…ANTTDANGSK (74 aa). Over residues 143–152 the composition is skewed to low complexity; it reads ASQQQQLQQN. The segment covering 162 to 178 has biased composition (polar residues); the sequence is NFSTTAPANTTDANGSK. Position 208 is a phosphoserine; by CDK8 (Ser-208). The interval 284–399 is disordered; the sequence is NNINSTKNGK…GDNPPPADNG (116 aa). A compositionally biased stretch (basic and acidic residues) spans 304–313; sequence NGDEKNKNNN. Over residues 318-365 the composition is skewed to low complexity; it reads NNNNSSEKNNNNNNNNNNNNDDNGNNNNNNSGNDNNNTTNNDSNNKNN. Over residues 366–387 the composition is skewed to polar residues; it reads SITTGNDNENIVNNDLPTTVVS.

The protein belongs to the mediator complex subunit 2 family. As to quaternary structure, component of the Mediator complex, which is composed of at least 21 subunits that form three structurally distinct submodules. The Mediator head module contains MED6, MED8, MED11, SRB4/MED17, SRB5/MED18, ROX3/MED19, SRB2/MED20 and SRB6/MED22, the middle module contains MED1, MED4, NUT1/MED5, MED7, CSE2/MED9, NUT2/MED10, SRB7/MED21 and SOH1/MED31, and the tail module contains MED2, PGD1/MED3, RGR1/MED14, GAL11/MED15 and SIN4/MED16. The head and the middle modules interact directly with RNA polymerase II, whereas the elongated tail module interacts with gene-specific regulatory proteins.

The protein resides in the nucleus. Component of the Mediator complex, a coactivator involved in the regulated transcription of nearly all RNA polymerase II-dependent genes. Mediator functions as a bridge to convey information from gene-specific regulatory proteins to the basal RNA polymerase II transcription machinery. The Mediator complex, having a compact conformation in its free form, is recruited to promoters by direct interactions with regulatory proteins and serves for the assembly of a functional preinitiation complex with RNA polymerase II and the general transcription factors. The Mediator complex unfolds to an extended conformation and partially surrounds RNA polymerase II, specifically interacting with the unphosphorylated form of the C-terminal domain (CTD) of RNA polymerase II. The Mediator complex dissociates from the RNA polymerase II holoenzyme and stays at the promoter when transcriptional elongation begins. In Saccharomyces cerevisiae (strain ATCC 204508 / S288c) (Baker's yeast), this protein is Mediator of RNA polymerase II transcription subunit 2 (MED2).